A 53-amino-acid polypeptide reads, in one-letter code: Large ribosomal subunit protein eL40 (53 aa).

The protein belongs to the eukaryotic ribosomal protein eL40 family.

This chain is Large ribosomal subunit protein eL40, found in Pyrobaculum calidifontis (strain DSM 21063 / JCM 11548 / VA1).